We begin with the raw amino-acid sequence, 291 residues long: 4-hydroxy-tetrahydrodipicolinate synthase (291 aa).

Threonine 47 is a binding site for pyruvate. Tyrosine 136 (proton donor/acceptor) is an active-site residue. Catalysis depends on lysine 164, which acts as the Schiff-base intermediate with substrate. Isoleucine 206 lines the pyruvate pocket.

Belongs to the DapA family. As to quaternary structure, homotetramer; dimer of dimers.

The protein localises to the cytoplasm. The catalysed reaction is L-aspartate 4-semialdehyde + pyruvate = (2S,4S)-4-hydroxy-2,3,4,5-tetrahydrodipicolinate + H2O + H(+). It participates in amino-acid biosynthesis; L-lysine biosynthesis via DAP pathway; (S)-tetrahydrodipicolinate from L-aspartate: step 3/4. Its function is as follows. Catalyzes the condensation of (S)-aspartate-beta-semialdehyde [(S)-ASA] and pyruvate to 4-hydroxy-tetrahydrodipicolinate (HTPA). The protein is 4-hydroxy-tetrahydrodipicolinate synthase of Leuconostoc citreum (strain KM20).